The following is a 197-amino-acid chain: MYB-like transcription factor EOBII (197 aa).

2 HTH myb-type domains span residues 10 to 62 (DAEV…LNYL) and 63 to 117 (RPDV…QKHI). 2 consecutive DNA-binding regions (H-T-H motif) follow at residues 38 to 62 (WNSL…LNYL) and 90 to 113 (WSKI…RTRI). Residues 125-158 (GQAASSEQNDHQEACTSQMSNGPNDNTIDQTYSP) form a disordered region. Over residues 138 to 158 (ACTSQMSNGPNDNTIDQTYSP) the composition is skewed to polar residues.

Specifically expressed in flowers, mostly in stigmas, petal tubes and petal limbs, and, to a lower extent, in anthers and stamen. Also present at low levels in roots, stems, leaves and sepals.

The protein localises to the nucleus. Its function is as follows. MYB-type transcription factor controlling the production of volatile organic compounds (VOCs), including floral volatile benzenoids and phenylpropanoids (FVBP), in flowers of fragrant cultivars (e.g. cv. Mitchell and cv. V26) by regulating the expression of ODO1 and EOBI, key regulators of the shikimate pathway, and of several biosynthetic floral scent-related genes including IGS, PAL2 and CFAT. This scent, mostly produced in the evening and night by the petals, attracts the pollinators (e.g. the night-active hawkmoth pollinator Manduca sexta). Binds to and activates the ODO1 and EOBI promoters via MYB binding sites (MBS) 5'-AAACCTAAT-3' and 5'-CTAACT-3'. Regulates the promoters of IGS1, CFAT and PAL2. Controls flowers petal opening by modulating a global transcriptomic switch. This chain is MYB-like transcription factor EOBII, found in Petunia hybrida (Petunia).